A 242-amino-acid chain; its full sequence is Type III pantothenate kinase (242 aa).

ATP is bound at residue 6-13 (DAGNTRLK). Substrate is bound by residues Tyr90 and 97 to 100 (GADR). Asp99 functions as the Proton acceptor in the catalytic mechanism. Asp119 contributes to the K(+) binding site. Position 122 (Ser122) interacts with ATP. Thr174 contributes to the substrate binding site.

It belongs to the type III pantothenate kinase family. As to quaternary structure, homodimer. NH4(+) is required as a cofactor. K(+) serves as cofactor.

The protein localises to the cytoplasm. The catalysed reaction is (R)-pantothenate + ATP = (R)-4'-phosphopantothenate + ADP + H(+). It participates in cofactor biosynthesis; coenzyme A biosynthesis; CoA from (R)-pantothenate: step 1/5. Its function is as follows. Catalyzes the phosphorylation of pantothenate (Pan), the first step in CoA biosynthesis. In Marinobacter nauticus (strain ATCC 700491 / DSM 11845 / VT8) (Marinobacter aquaeolei), this protein is Type III pantothenate kinase.